The chain runs to 90 residues: Barrier-to-autointegration factor-like protein (90 aa).

This sequence belongs to the BAF family. As to quaternary structure, homodimer. Heterodimerizes with BANF1. In terms of tissue distribution, expressed strongly in testis and pancreas. Also detected in brain, colon, liver, lung, ovary, placenta, prostate, small intestine, spleen and thymus. Not detected in heart, kidney and skeletal muscle.

Its subcellular location is the nucleus. The protein resides in the cytoplasm. In terms of biological role, may play a role in BANF1 regulation and influence tissue-specific roles of BANF1. This is Barrier-to-autointegration factor-like protein (BANF2) from Homo sapiens (Human).